Consider the following 465-residue polypeptide: Ribulose bisphosphate carboxylase large chain (465 aa).

Lys-4 is modified (N6,N6,N6-trimethyllysine). 2 residues coordinate substrate: Asn-113 and Thr-163. The active-site Proton acceptor is the Lys-165. Lys-167 contributes to the substrate binding site. 3 residues coordinate Mg(2+): Lys-191, Asp-193, and Glu-194. Lys-191 is modified (N6-carboxylysine). The active-site Proton acceptor is His-284. Positions 285, 317, and 369 each coordinate substrate.

Belongs to the RuBisCO large chain family. Type I subfamily. In terms of assembly, heterohexadecamer of 8 large chains and 8 small chains; disulfide-linked. The disulfide link is formed within the large subunit homodimers. The cofactor is Mg(2+). The disulfide bond which can form in the large chain dimeric partners within the hexadecamer appears to be associated with oxidative stress and protein turnover.

It localises to the plastid. The protein resides in the chloroplast. The enzyme catalyses 2 (2R)-3-phosphoglycerate + 2 H(+) = D-ribulose 1,5-bisphosphate + CO2 + H2O. The catalysed reaction is D-ribulose 1,5-bisphosphate + O2 = 2-phosphoglycolate + (2R)-3-phosphoglycerate + 2 H(+). Its function is as follows. RuBisCO catalyzes two reactions: the carboxylation of D-ribulose 1,5-bisphosphate, the primary event in carbon dioxide fixation, as well as the oxidative fragmentation of the pentose substrate in the photorespiration process. Both reactions occur simultaneously and in competition at the same active site. The sequence is that of Ribulose bisphosphate carboxylase large chain from Epacris sp.